Here is a 364-residue protein sequence, read N- to C-terminus: Transposase for insertion sequence element IS1111A (364 aa).

The protein belongs to the transposase IS1111A/IS1328/IS1533 family.

Required for the transposition of the insertion element. The protein is Transposase for insertion sequence element IS1111A of Coxiella burnetii (strain RSA 493 / Nine Mile phase I).